The primary structure comprises 129 residues: Glycine cleavage system H protein (129 aa).

The Lipoyl-binding domain occupies 24 to 106 (SYTVGITEHA…YGEGWFFRVM (83 aa)). Lysine 65 carries the post-translational modification N6-lipoyllysine.

The protein belongs to the GcvH family. The glycine cleavage system is composed of four proteins: P, T, L and H. Requires (R)-lipoate as cofactor.

Functionally, the glycine cleavage system catalyzes the degradation of glycine. The H protein shuttles the methylamine group of glycine from the P protein to the T protein. This is Glycine cleavage system H protein from Shewanella baltica (strain OS155 / ATCC BAA-1091).